A 339-amino-acid polypeptide reads, in one-letter code: Geranylgeranyl transferase type-2 subunit beta (339 aa).

Thr-11 is subject to Phosphothreonine. 6 PFTB repeats span residues Leu-28 to Gly-69, Arg-76 to Asp-117, Val-124 to Gly-165, Val-172 to Ser-213, Ser-220 to Gly-261, and Arg-268 to Gly-310. Geranylgeranyl diphosphate-binding positions include His-198 to Gly-200 and Arg-240 to Lys-243. Residues Asp-246 and Cys-248 each contribute to the Zn(2+) site. Residues Tyr-249 and Tyr-249–Trp-252 contribute to the geranylgeranyl diphosphate site. Position 298 (His-298) interacts with Zn(2+).

Belongs to the protein prenyltransferase subunit beta family. As to quaternary structure, heterotrimer composed of RABGGTA, RABGGTB and CHM; within this trimer, RABGGTA and RABGGTB form the catalytic component B, while CHM (component A) mediates peptide substrate binding. The Rab GGTase dimer (RGGT) interacts with CHM (component A) prior to Rab protein binding; the association is stabilized by geranylgeranyl pyrophosphate (GGpp). The CHM:RGGT:Rab complex is destabilized by GGpp. Interaction of RABGGTB with prenylated PTP4A2 precludes its association with RABGGTA and inhibits enzyme activity. Interacts with CHODL. Interacts with non-phosphorylated form of RAB8A; phosphorylation of RAB8A at 'Thr-72' disrupts this interaction. It depends on Zn(2+) as a cofactor. In terms of tissue distribution, ubiquitous. Detected in all the major organs in adult animals.

It carries out the reaction geranylgeranyl diphosphate + L-cysteinyl-[protein] = S-geranylgeranyl-L-cysteinyl-[protein] + diphosphate. Its activity is regulated as follows. The enzymatic reaction requires the aid of a Rab escort protein (also called component A), such as CHM. In terms of biological role, catalyzes the transfer of a geranylgeranyl moiety from geranylgeranyl diphosphate to both cysteines of Rab proteins with the C-terminal sequence -XXCC, -XCXC and -CCXX, such as RAB1A, RAB3A, RAB5A and RAB7A. This chain is Geranylgeranyl transferase type-2 subunit beta (Rabggtb), found in Mus musculus (Mouse).